Consider the following 1004-residue polypeptide: Retrovirus-related Pol polyprotein from type-1 retrotransposable element R1 (1004 aa).

In terms of domain architecture, Reverse transcriptase spans 450–717 (QCLLESYFPQ…SEVKHLGIFV (268 aa)). The interval 853–1004 (LSGSQFKELL…RLMRGMRIRE (152 aa)) is nucleic acid-binding endonuclease.

It catalyses the reaction DNA(n) + a 2'-deoxyribonucleoside 5'-triphosphate = DNA(n+1) + diphosphate. This Bradysia coprophila (Dark-winged fungus gnat) protein is Retrovirus-related Pol polyprotein from type-1 retrotransposable element R1.